Consider the following 324-residue polypeptide: Aldo-keto reductase family 1 member A1-A (324 aa).

Residues 10 to 19 (GQRMPTVGLG), Thr20, Trp21, and Asp44 contribute to the NADP(+) site. Catalysis depends on Tyr49, which acts as the Proton donor. NADP(+) is bound by residues Ser161, Asn162, Ser210, Leu212, Ser214, Lys262, Ser263, Val264, Thr265, Arg268, Gln271, and Asn272.

This sequence belongs to the aldo/keto reductase family.

The protein resides in the cytoplasm. The protein localises to the cytosol. Its subcellular location is the apical cell membrane. The catalysed reaction is a primary alcohol + NADP(+) = an aldehyde + NADPH + H(+). It carries out the reaction S-nitroso-CoA + NADPH + H(+) = sulfinamide-CoA + NADP(+). It catalyses the reaction S-nitrosoglutathione + NADPH + H(+) = S-(hydroxysulfenamide)glutathione + NADP(+). Functionally, catalyzes the NADPH-dependent reduction of a wide variety of carbonyl-containing compounds to their corresponding alcohols. Displays enzymatic activity towards endogenous metabolites such as aromatic and aliphatic aldehydes, ketones, monosaccharides and bile acids. Acts as an aldehyde-detoxification enzyme. Also acts as an inhibitor of protein S-nitrosylation by mediating degradation of S-nitroso-coenzyme A (S-nitroso-CoA), a cofactor required to S-nitrosylate proteins. Also acts as a S-nitroso-glutathione reductase by catalyzing the NADPH-dependent reduction of S-nitrosoglutathione. Displays no reductase activity towards retinoids. The polypeptide is Aldo-keto reductase family 1 member A1-A (akr1a1a) (Danio rerio (Zebrafish)).